The primary structure comprises 198 residues: Na(+)-translocating NADH-quinone reductase subunit E (198 aa).

6 helical membrane-spanning segments follow: residues 11-31, 39-59, 77-97, 110-130, 140-160, and 176-196; these read SIFI…FLAV, MGLG…NNLI, FLSF…LEMA, GIFL…SFMV, VVYG…MAGI, and LGIT…FSGI.

Belongs to the NqrDE/RnfAE family. Composed of six subunits; NqrA, NqrB, NqrC, NqrD, NqrE and NqrF.

It localises to the cell inner membrane. It catalyses the reaction a ubiquinone + n Na(+)(in) + NADH + H(+) = a ubiquinol + n Na(+)(out) + NAD(+). Its function is as follows. NQR complex catalyzes the reduction of ubiquinone-1 to ubiquinol by two successive reactions, coupled with the transport of Na(+) ions from the cytoplasm to the periplasm. NqrA to NqrE are probably involved in the second step, the conversion of ubisemiquinone to ubiquinol. This Aeromonas salmonicida (strain A449) protein is Na(+)-translocating NADH-quinone reductase subunit E.